The chain runs to 644 residues: Exoribonuclease 2 (644 aa).

In terms of domain architecture, RNB spans Arg-189–Lys-516. The S1 motif domain occupies Asn-561–Ala-643.

This sequence belongs to the RNR ribonuclease family. RNase II subfamily.

Its subcellular location is the cytoplasm. The enzyme catalyses Exonucleolytic cleavage in the 3'- to 5'-direction to yield nucleoside 5'-phosphates.. Its function is as follows. Involved in mRNA degradation. Hydrolyzes single-stranded polyribonucleotides processively in the 3' to 5' direction. The chain is Exoribonuclease 2 from Salmonella gallinarum (strain 287/91 / NCTC 13346).